The following is a 388-amino-acid chain: MRYFTAGESHGPRLTAIIEGVPAGLSLSAEDINIELKRRQGGYGRGGRMKIESDQVEITSGVRHGKTIGSPITLNVTNRDFKNWEQIMAAQDVEDKIKKQRRLTKPRPGHADLVGGMKYEFEDLRNVLERSSARETTMRVAVGAVAKKLLHELEIEVANHVVNFGGREISSPEHLSVQEIRETAGRSDLSIFDESQAEDLRTYIDQIKKAGDTIGGIIETRVEGVPAGLGSYVQYDRKLDAKIAGAVVSINAFKGVEFGLGFEAGKRPGSQVMDEIIWSENKGYTRSSNQLGGFEGGMTNGEQLIVRGVMKPIPTLYKPLMSIDTESHEPYKASVERSDPTALPAAGVVMENVVATVVAQEICDKFNSDTINELKKALVDYKKRLSEY.

Arg39 and Arg45 together coordinate NADP(+). FMN-binding positions include 130–132 (RSS), 251–252 (NA), Gly296, 311–315 (KPIPT), and Arg337.

This sequence belongs to the chorismate synthase family. Homotetramer. FMNH2 is required as a cofactor.

The catalysed reaction is 5-O-(1-carboxyvinyl)-3-phosphoshikimate = chorismate + phosphate. The protein operates within metabolic intermediate biosynthesis; chorismate biosynthesis; chorismate from D-erythrose 4-phosphate and phosphoenolpyruvate: step 7/7. Catalyzes the anti-1,4-elimination of the C-3 phosphate and the C-6 proR hydrogen from 5-enolpyruvylshikimate-3-phosphate (EPSP) to yield chorismate, which is the branch point compound that serves as the starting substrate for the three terminal pathways of aromatic amino acid biosynthesis. This reaction introduces a second double bond into the aromatic ring system. The sequence is that of Chorismate synthase from Lactococcus lactis subsp. cremoris (strain MG1363).